The sequence spans 425 residues: Serine--tRNA ligase (425 aa).

Residue 233–235 participates in L-serine binding; the sequence is TAE. Residue 264–266 participates in ATP binding; it reads RRE. Position 287 (E287) interacts with L-serine. 351-354 lines the ATP pocket; it reads EISS. Residue S387 participates in L-serine binding.

Belongs to the class-II aminoacyl-tRNA synthetase family. Type-1 seryl-tRNA synthetase subfamily. Homodimer. The tRNA molecule binds across the dimer.

Its subcellular location is the cytoplasm. The catalysed reaction is tRNA(Ser) + L-serine + ATP = L-seryl-tRNA(Ser) + AMP + diphosphate + H(+). The enzyme catalyses tRNA(Sec) + L-serine + ATP = L-seryl-tRNA(Sec) + AMP + diphosphate + H(+). It participates in aminoacyl-tRNA biosynthesis; selenocysteinyl-tRNA(Sec) biosynthesis; L-seryl-tRNA(Sec) from L-serine and tRNA(Sec): step 1/1. Catalyzes the attachment of serine to tRNA(Ser). Is also able to aminoacylate tRNA(Sec) with serine, to form the misacylated tRNA L-seryl-tRNA(Sec), which will be further converted into selenocysteinyl-tRNA(Sec). This is Serine--tRNA ligase from Thermotoga petrophila (strain ATCC BAA-488 / DSM 13995 / JCM 10881 / RKU-1).